Consider the following 108-residue polypeptide: Somatoliberin (108 aa).

The signal sequence occupies residues 1-20 (MPLWVFFFVILTLSNSSHCS). Positions 21-31 (PPPPLTLRMRR) are excised as a propeptide. The residue at position 75 (leucine 75) is a Leucine amide. Positions 78 to 108 (QVDSMWAEQKQMELESILVALLQKHSRNSQG) are excised as a propeptide.

Belongs to the glucagon family.

The protein localises to the secreted. In terms of biological role, GRF is released by the hypothalamus and acts on the adenohypophyse to stimulate the secretion of growth hormone. This chain is Somatoliberin (GHRH), found in Homo sapiens (Human).